The following is a 406-amino-acid chain: Putative competence-damage inducible protein (406 aa).

This sequence belongs to the CinA family.

The polypeptide is Putative competence-damage inducible protein (Natranaerobius thermophilus (strain ATCC BAA-1301 / DSM 18059 / JW/NM-WN-LF)).